A 727-amino-acid polypeptide reads, in one-letter code: ABC transporter G family member 6 (727 aa).

Residues 68–333 enclose the ABC transporter domain; it reads LSFTDLTYSV…FAEFGHPIPE (266 aa). 126-133 lines the ATP pocket; the sequence is GASGSGKS. Residues 421-631 enclose the ABC transmembrane type-2 domain; that stretch reads VELAVLAKRS…PYEAVLLNEF (211 aa). Helical transmembrane passes span 440–460, 475–495, 517–537, 560–580, 581–601, and 700–720; these read LFGIRLGAVLVTGFILATMFW, CFAFAMSTTFYTCADALPVFL, LSHSLVALPSLIILSLAFAAI, ASFWAGSSFVTFLSGVVPHVM, LGYTIVVAILAYFLLFSGFFI, and LWVTVAWGFFFRILFYFSLLL.

The protein belongs to the ABC transporter superfamily. ABCG family. Eye pigment precursor importer (TC 3.A.1.204) subfamily.

It localises to the membrane. This chain is ABC transporter G family member 6 (ABCG6), found in Arabidopsis thaliana (Mouse-ear cress).